Consider the following 319-residue polypeptide: Inactive hydroxysteroid dehydrogenase-like protein 1 (319 aa).

Residues 2–82 (AAVDSFQLLY…CGASEAIAKA (81 aa)) are required for mitochondria translocation. NADP(+) contacts are provided by residues 74 to 80 (GASEAIA), K99, and D125.

This sequence belongs to the short-chain dehydrogenases/reductases (SDR) family. 17-beta-HSD 3 subfamily.

It localises to the mitochondrion. The sequence is that of Inactive hydroxysteroid dehydrogenase-like protein 1 (hsdl1) from Danio rerio (Zebrafish).